The following is a 369-amino-acid chain: DNA replication and repair protein RecF (369 aa).

30-37 (GDNGSGKT) is a binding site for ATP.

It belongs to the RecF family.

It is found in the cytoplasm. Functionally, the RecF protein is involved in DNA metabolism; it is required for DNA replication and normal SOS inducibility. RecF binds preferentially to single-stranded, linear DNA. It also seems to bind ATP. This chain is DNA replication and repair protein RecF, found in Pseudomonas aeruginosa (strain LESB58).